Reading from the N-terminus, the 274-residue chain is 2,3,4,5-tetrahydropyridine-2,6-dicarboxylate N-succinyltransferase (274 aa).

Substrate contacts are provided by arginine 106 and aspartate 143.

It belongs to the transferase hexapeptide repeat family. In terms of assembly, homotrimer.

The protein localises to the cytoplasm. The enzyme catalyses (S)-2,3,4,5-tetrahydrodipicolinate + succinyl-CoA + H2O = (S)-2-succinylamino-6-oxoheptanedioate + CoA. It participates in amino-acid biosynthesis; L-lysine biosynthesis via DAP pathway; LL-2,6-diaminopimelate from (S)-tetrahydrodipicolinate (succinylase route): step 1/3. The polypeptide is 2,3,4,5-tetrahydropyridine-2,6-dicarboxylate N-succinyltransferase (Rickettsia conorii (strain ATCC VR-613 / Malish 7)).